A 214-amino-acid chain; its full sequence is Ras-like protein rasZ (214 aa).

Residue 16 to 23 (GDGGVGKT) coordinates GTP. An Effector region motif is present at residues 38 to 46 (YDPTIEDSY). GTP is bound by residues 63-67 (DTAGQ) and 122-125 (NKSD). At cysteine 211 the chain carries Cysteine methyl ester. The S-geranylgeranyl cysteine moiety is linked to residue cysteine 211. Positions 212–214 (KMM) are cleaved as a propeptide — removed in mature form.

The protein belongs to the small GTPase superfamily. Ras family.

It is found in the cell membrane. The catalysed reaction is GTP + H2O = GDP + phosphate + H(+). Functionally, ras proteins bind GDP/GTP and possess intrinsic GTPase activity. This is Ras-like protein rasZ (rasZ) from Dictyostelium discoideum (Social amoeba).